The primary structure comprises 340 residues: 4-hydroxythreonine-4-phosphate dehydrogenase (340 aa).

2 residues coordinate substrate: His-141 and Thr-142. A divalent metal cation is bound by residues His-171, His-216, and His-271. Substrate contacts are provided by Lys-279, Asn-288, and Arg-297.

This sequence belongs to the PdxA family. As to quaternary structure, homodimer. Zn(2+) serves as cofactor. Mg(2+) is required as a cofactor. Requires Co(2+) as cofactor.

It is found in the cytoplasm. The catalysed reaction is 4-(phosphooxy)-L-threonine + NAD(+) = 3-amino-2-oxopropyl phosphate + CO2 + NADH. The protein operates within cofactor biosynthesis; pyridoxine 5'-phosphate biosynthesis; pyridoxine 5'-phosphate from D-erythrose 4-phosphate: step 4/5. Functionally, catalyzes the NAD(P)-dependent oxidation of 4-(phosphooxy)-L-threonine (HTP) into 2-amino-3-oxo-4-(phosphooxy)butyric acid which spontaneously decarboxylates to form 3-amino-2-oxopropyl phosphate (AHAP). This chain is 4-hydroxythreonine-4-phosphate dehydrogenase, found in Desulforapulum autotrophicum (strain ATCC 43914 / DSM 3382 / VKM B-1955 / HRM2) (Desulfobacterium autotrophicum).